The chain runs to 328 residues: DNA-directed RNA polymerase subunit alpha 1 (328 aa).

The alpha N-terminal domain (alpha-NTD) stretch occupies residues 1–234; the sequence is MQGFVKDFLK…GQLDEFVDER (234 aa). Residues 248–328 are alpha C-terminal domain (alpha-CTD); the sequence is FDPILLRPVN…NWPPASLIED (81 aa).

This sequence belongs to the RNA polymerase alpha chain family. Homodimer. The RNAP catalytic core consists of 2 alpha, 1 beta, 1 beta' and 1 omega subunit. When a sigma factor is associated with the core the holoenzyme is formed, which can initiate transcription.

It catalyses the reaction RNA(n) + a ribonucleoside 5'-triphosphate = RNA(n+1) + diphosphate. Functionally, DNA-dependent RNA polymerase catalyzes the transcription of DNA into RNA using the four ribonucleoside triphosphates as substrates. In Psychromonas ingrahamii (strain DSM 17664 / CCUG 51855 / 37), this protein is DNA-directed RNA polymerase subunit alpha 1.